The sequence spans 453 residues: Membrane-bound acylglycerophosphatidylinositol O-acyltransferase mboa-7 (453 aa).

The next 7 helical transmembrane spans lie at 4–24, 36–56, 79–99, 154–174, 195–215, 220–240, and 244–264; these read ILGL…FSFG, ILAS…PKIV, LYVF…HYIL, AYFY…QMLI, VRLL…PLDI, AIWE…FVVF, and VYSA…GIYP. N-linked (GlcNAc...) asparagine glycosylation is present at Asn319. Residue His350 is part of the active site. The next 2 helical transmembrane spans lie at 354 to 374 and 421 to 441; these read AGYF…DVIF and FWSS…IYSA.

The protein belongs to the membrane-bound acyltransferase family. In terms of tissue distribution, expressed ubiquitously throughout development from early embryo to larval and adult stages. In adults, strongly expressed in pharyngeal muscle, body wall muscle, vulval cells, distal tip cells, intestinal cells and spermatheca.

The protein localises to the membrane. It catalyses the reaction 1-octadecanoyl-sn-glycero-3-phospho-(1D-myo-inositol) + (5Z,8Z,11Z,14Z,17Z)-eicosapentaenoyl-CoA = 1-octadecanoyl-2-(5Z,8Z,11Z,14Z,17Z-eicosapentaenoyl)-sn-glycero-3-phospho-(1D-myo-inositol) + CoA. The enzyme catalyses a 1-acyl-sn-glycero-3-phospho-(1D-myo-inositol) + (5Z,8Z,11Z,14Z,17Z)-eicosapentaenoyl-CoA = a 1-acyl-2-(5Z,8Z,11Z,14Z,17Z-eicosapentaenoyl)-sn-glycero-3-phospho-(1D-myo-inositol) + CoA. It carries out the reaction a 1-acyl-sn-glycero-3-phospho-(1D-myo-inositol) + (5Z,8Z,11Z,14Z)-eicosatetraenoyl-CoA = a 1-acyl-2-(5Z,8Z,11Z,14Z-eicosatetraenoyl)-sn-glycero-3-phospho-(1D-myo-inositol) + CoA. It functions in the pathway lipid metabolism; phospholipid metabolism. Its function is as follows. Acyltransferase which mediates the conversion of lysophosphatidylinositol (1-acyl-sn-glycero-3-phosphatidylinositol or LPI) into phosphatidylinositol (1,2-diacyl-sn-glycero-3-phosphoinositol or PI) (LPIAT activity). Prefers sn-2-LPI rather than sn-1-LPI as the acyl acceptor. Lysophospholipid acyltransferases (LPLATs) catalyze the reacylation step of the phospholipid remodeling pathway also known as the Lands cycle. Involved in the selective incorporation of arachidonoyl-CoA ((5Z,8Z,11Z,14Z)-eicosatetraenoyl-CoA) and (5Z,8Z,11Z,14Z,17Z)-eicosapentaenoyl-CoA (EPA-CoA) into PI. Besides its role in biomembranes, PI is a precursor of PI 3-phosphate (PIP3) and its fatty acid composition has an important role in PI3P signaling. The polypeptide is Membrane-bound acylglycerophosphatidylinositol O-acyltransferase mboa-7 (Caenorhabditis elegans).